The primary structure comprises 404 residues: Exodeoxyribonuclease 7 large subunit (404 aa).

Belongs to the XseA family. In terms of assembly, heterooligomer composed of large and small subunits.

The protein resides in the cytoplasm. It catalyses the reaction Exonucleolytic cleavage in either 5'- to 3'- or 3'- to 5'-direction to yield nucleoside 5'-phosphates.. In terms of biological role, bidirectionally degrades single-stranded DNA into large acid-insoluble oligonucleotides, which are then degraded further into small acid-soluble oligonucleotides. This chain is Exodeoxyribonuclease 7 large subunit, found in Caldanaerobacter subterraneus subsp. tengcongensis (strain DSM 15242 / JCM 11007 / NBRC 100824 / MB4) (Thermoanaerobacter tengcongensis).